The primary structure comprises 56 residues: Sec-independent protein translocase protein TatA (56 aa).

The helical transmembrane segment at 1–21 (MALGPWQIFLILVIILVLFGA) threads the bilayer.

Belongs to the TatA/E family. In terms of assembly, the Tat system comprises two distinct complexes: a TatABC complex, containing multiple copies of TatA, TatB and TatC subunits, and a separate TatA complex, containing only TatA subunits. Substrates initially bind to the TatABC complex, which probably triggers association of the separate TatA complex to form the active translocon.

The protein localises to the cell inner membrane. Its function is as follows. Part of the twin-arginine translocation (Tat) system that transports large folded proteins containing a characteristic twin-arginine motif in their signal peptide across membranes. TatA could form the protein-conducting channel of the Tat system. This chain is Sec-independent protein translocase protein TatA, found in Ehrlichia ruminantium (strain Welgevonden).